Consider the following 310-residue polypeptide: Olfactory receptor 2A1/2A42 (310 aa).

Over 1–24 (MGENQTMVTEFLLLGFLLGPRIQM) the chain is Extracellular. N-linked (GlcNAc...) asparagine glycosylation is present at N4. A helical transmembrane segment spans residues 25–48 (LLFGLFSLFYIFTLLGNGAILGLI). At 49–56 (SLDSRLHT) the chain is on the cytoplasmic side. The helical transmembrane segment at 57 to 78 (PMYFFLSHLAVVDIAYTRNTVP) threads the bilayer. Residues 79 to 99 (QMLANLLHPAKPISFAGCMTQ) are Extracellular-facing. A disulfide bridge connects residues C96 and C188. A helical membrane pass occupies residues 100–119 (TFLCLSFGHSECLLLVLMSY). Topologically, residues 120-138 (DRYVAICHPLRYSVIMTWR) are cytoplasmic. The helical transmembrane segment at 139–157 (VCITLAVTSWTCGSLLALA) threads the bilayer. Residues 158 to 195 (HVVLILRLPFSGPHEINHFFCEILSVLRLACADTWLNQ) are Extracellular-facing. The chain crosses the membrane as a helical span at residues 196–218 (VVIFAACVFFLVGPPSLVLVSYS). Residues 219–235 (HILAAILRIQSGEGRRK) are Cytoplasmic-facing. Residues 236–258 (AFSTCSSHLCVVGLFFGSAIIMY) form a helical membrane-spanning segment. The Extracellular segment spans residues 259 to 271 (MAPKSRHPEEQQK). Residues 272–291 (VFFLFYSFFNPTLNPLIYSL) form a helical membrane-spanning segment. Topologically, residues 292–310 (RNGEVKGALRRALGKESHS) are cytoplasmic.

Belongs to the G-protein coupled receptor 1 family.

It is found in the cell membrane. Its function is as follows. Odorant receptor. This is Olfactory receptor 2A1/2A42 (OR2A1) from Homo sapiens (Human).